Consider the following 311-residue polypeptide: uncharacterized protein (311 aa).

This is an uncharacterized protein from Bacillus subtilis (strain 168).